A 418-amino-acid polypeptide reads, in one-letter code: tRNA wybutosine-synthesizing protein 2 (418 aa).

S-adenosyl-L-methionine-binding positions include Ser-228, Lys-235, Glu-275–Ile-276, and Glu-302–Asn-303.

The protein belongs to the class I-like SAM-binding methyltransferase superfamily. TRM5/TYW2 family.

Its subcellular location is the cytoplasm. It is found in the nucleus. The enzyme catalyses 4-demethylwyosine(37) in tRNA(Phe) + S-adenosyl-L-methionine = 4-demethyl-7-[(3S)-3-amino-3-carboxypropyl]wyosine(37) in tRNA(Phe) + S-methyl-5'-thioadenosine + H(+). The protein operates within tRNA modification; wybutosine-tRNA(Phe) biosynthesis. In terms of biological role, S-adenosyl-L-methionine-dependent transferase that acts as a component of the wybutosine biosynthesis pathway. Wybutosine is a hyper modified guanosine with a tricyclic base found at the 3'-position adjacent to the anticodon of eukaryotic phenylalanine tRNA. Catalyzes the transfer of the alpha-amino-alpha-carboxypropyl (acp) group from S-adenosyl-L-methionine to the C-7 position of 4-demethylwyosine (imG-14) to produce wybutosine-86. This is tRNA wybutosine-synthesizing protein 2 (trm12) from Schizosaccharomyces pombe (strain 972 / ATCC 24843) (Fission yeast).